A 419-amino-acid chain; its full sequence is UDP-N-acetylglucosamine 1-carboxyvinyltransferase 2 (419 aa).

Phosphoenolpyruvate is bound at residue Lys24–Asn25. Position 94 (Arg94) interacts with UDP-N-acetyl-alpha-D-glucosamine. The active-site Proton donor is Cys118. 2-(S-cysteinyl)pyruvic acid O-phosphothioketal is present on Cys118. UDP-N-acetyl-alpha-D-glucosamine is bound by residues Arg123 to Gln127, Asp307, and Ile329.

This sequence belongs to the EPSP synthase family. MurA subfamily.

It localises to the cytoplasm. It carries out the reaction phosphoenolpyruvate + UDP-N-acetyl-alpha-D-glucosamine = UDP-N-acetyl-3-O-(1-carboxyvinyl)-alpha-D-glucosamine + phosphate. It participates in cell wall biogenesis; peptidoglycan biosynthesis. In terms of biological role, cell wall formation. Adds enolpyruvyl to UDP-N-acetylglucosamine. This Staphylococcus epidermidis (strain ATCC 35984 / DSM 28319 / BCRC 17069 / CCUG 31568 / BM 3577 / RP62A) protein is UDP-N-acetylglucosamine 1-carboxyvinyltransferase 2.